The primary structure comprises 85 residues: Type 3 secretion system needle filament protein (85 aa).

Residues 13–41 (LDTVANALKEQANAANKDVNDAIKALQGT) adopt a coiled-coil conformation.

As to quaternary structure, the core secretion machinery of the T3SS is composed of approximately 20 different proteins, including cytoplasmic components, a base, an export apparatus and a needle. This subunit polymerizes and forms the helical needle filament. Forms a stable heterotrimeric complex with PscE and PscG in the cytoplasm, blocking it in a monomeric state and preventing its polymerization.

The protein localises to the secreted. The protein resides in the cell surface. Its function is as follows. Component of the type III secretion system (T3SS), also called injectisome, which is used to inject bacterial effector proteins into eukaryotic host cells, facilitating the establishment and dissemination of infection. PscF/SctF forms the external needle filament that protrudes from the bacterial surface. This Pseudomonas aeruginosa (strain ATCC 15692 / DSM 22644 / CIP 104116 / JCM 14847 / LMG 12228 / 1C / PRS 101 / PAO1) protein is Type 3 secretion system needle filament protein.